Consider the following 150-residue polypeptide: Large ribosomal subunit protein bL9 (150 aa).

This sequence belongs to the bacterial ribosomal protein bL9 family.

In terms of biological role, binds to the 23S rRNA. The chain is Large ribosomal subunit protein bL9 from Neisseria gonorrhoeae.